The chain runs to 335 residues: Large ribosomal subunit protein uL3 (335 aa).

3 disordered regions span residues 1-35 (MPQPNRPRKGSMGFSPRKRAESEVPRFNSWPADDG), 234-256 (IGNLGPWNPSRVRSTVPQQGQTG), and 312-335 (AVRPNESPRLDPEVRYVSTASNQG). Positions 244 to 256 (RVRSTVPQQGQTG) are enriched in polar residues.

This sequence belongs to the universal ribosomal protein uL3 family. In terms of assembly, part of the 50S ribosomal subunit. Forms a cluster with proteins L14 and L24e.

One of the primary rRNA binding proteins, it binds directly near the 3'-end of the 23S rRNA, where it nucleates assembly of the 50S subunit. This chain is Large ribosomal subunit protein uL3, found in Halobacterium salinarum (strain ATCC 29341 / DSM 671 / R1).